The primary structure comprises 268 residues: CCAAT/enhancer-binding protein delta (268 aa).

Disordered regions lie at residues 1–50 (MSAA…STTP), 98–132 (LELL…DAPG), and 152–223 (AAQP…QQKL). At serine 2 the chain carries N-acetylserine. A Glycyl lysine isopeptide (Lys-Gly) (interchain with G-Cter in SUMO) cross-link involves residue lysine 120. The segment covering 155–173 (PTPPTSPEPPRGSPGPSLA) has biased composition (pro residues). The segment covering 177–201 (VREKGAGKRGPDRGSPEYRQRRERN) has biased composition (basic and acidic residues). The bZIP domain maps to 191–254 (SPEYRQRRER…ASLRQFFKEL (64 aa)). Positions 195 to 222 (RQRRERNNIAVRKSRDKAKRRNQEMQQK) are basic motif. The leucine-zipper stretch occupies residues 226–254 (LSAENEKLHQRVEQLTRDLASLRQFFKEL).

Belongs to the bZIP family. C/EBP subfamily. In terms of assembly, binds DNA as a homodimer and as a heterodimer. Can form stable heterodimers with CEBPA, CEBPB and CEBPE. Directly interacts with SPI1/PU.1; this interaction does not affect DNA-binding properties of each partner. Interacts with PRDM16. Ubiquitously expressed.

It localises to the nucleus. Transcription activator that recognizes two different DNA motifs: the CCAAT homology common to many promoters and the enhanced core homology common to many enhancers. Important transcription factor regulating the expression of genes involved in immune and inflammatory responses. Transcriptional activator that enhances IL6 transcription alone and as heterodimer with CEBPB. The chain is CCAAT/enhancer-binding protein delta (Cebpd) from Rattus norvegicus (Rat).